We begin with the raw amino-acid sequence, 207 residues long: Enolase (207 aa).

(2R)-2-phosphoglycerate is bound at residue Gln162. Glu204 serves as the catalytic Proton donor.

The protein belongs to the enolase family.

The protein resides in the cytoplasm. The protein localises to the secreted. It localises to the cell surface. It catalyses the reaction (2R)-2-phosphoglycerate = phosphoenolpyruvate + H2O. It functions in the pathway carbohydrate degradation; glycolysis; pyruvate from D-glyceraldehyde 3-phosphate: step 4/5. In terms of biological role, catalyzes the reversible conversion of 2-phosphoglycerate (2-PG) into phosphoenolpyruvate (PEP). It is essential for the degradation of carbohydrates via glycolysis. The chain is Enolase from Campylobacter fetus.